Reading from the N-terminus, the 501-residue chain is Glutamate--tRNA ligase (501 aa).

The 'HIGH' region signature appears at Pro-10–Gly-20. A 'KMSKS' region motif is present at residues Lys-251–Arg-255. Residue Lys-254 participates in ATP binding.

This sequence belongs to the class-I aminoacyl-tRNA synthetase family. Glutamate--tRNA ligase type 1 subfamily. Monomer.

The protein resides in the cytoplasm. The catalysed reaction is tRNA(Glu) + L-glutamate + ATP = L-glutamyl-tRNA(Glu) + AMP + diphosphate. Catalyzes the attachment of glutamate to tRNA(Glu) in a two-step reaction: glutamate is first activated by ATP to form Glu-AMP and then transferred to the acceptor end of tRNA(Glu). This is Glutamate--tRNA ligase from Desulforudis audaxviator (strain MP104C).